Here is a 177-residue protein sequence, read N- to C-terminus: Large ribosomal subunit protein uL5 (177 aa).

Belongs to the universal ribosomal protein uL5 family. As to quaternary structure, part of the 50S ribosomal subunit; part of the 5S rRNA/L5/L18/L25 subcomplex. Contacts the 5S rRNA and the P site tRNA. Forms a bridge to the 30S subunit in the 70S ribosome.

Its function is as follows. This is one of the proteins that bind and probably mediate the attachment of the 5S RNA into the large ribosomal subunit, where it forms part of the central protuberance. In the 70S ribosome it contacts protein S13 of the 30S subunit (bridge B1b), connecting the 2 subunits; this bridge is implicated in subunit movement. Contacts the P site tRNA; the 5S rRNA and some of its associated proteins might help stabilize positioning of ribosome-bound tRNAs. This Wolbachia pipientis wMel protein is Large ribosomal subunit protein uL5.